The chain runs to 461 residues: Asparagine--tRNA ligase (461 aa).

It belongs to the class-II aminoacyl-tRNA synthetase family. As to quaternary structure, homodimer.

The protein localises to the cytoplasm. The enzyme catalyses tRNA(Asn) + L-asparagine + ATP = L-asparaginyl-tRNA(Asn) + AMP + diphosphate + H(+). This is Asparagine--tRNA ligase from Nitratidesulfovibrio vulgaris (strain DP4) (Desulfovibrio vulgaris).